The sequence spans 607 residues: DNA mismatch repair protein MutL (607 aa).

Residues 374 to 411 form a disordered region; that stretch reads RTEAGNEHVPSANRIQPPDPSIDMPDEPVPEQTDEPVA. Residues 397 to 407 show a composition bias toward acidic residues; sequence MPDEPVPEQTD.

This sequence belongs to the DNA mismatch repair MutL/HexB family.

In terms of biological role, this protein is involved in the repair of mismatches in DNA. It is required for dam-dependent methyl-directed DNA mismatch repair. May act as a 'molecular matchmaker', a protein that promotes the formation of a stable complex between two or more DNA-binding proteins in an ATP-dependent manner without itself being part of a final effector complex. This Exiguobacterium sibiricum (strain DSM 17290 / CCUG 55495 / CIP 109462 / JCM 13490 / 255-15) protein is DNA mismatch repair protein MutL.